The following is a 916-amino-acid chain: MSRNSPLQSGQRGPPNGSPYPDSSQNNDTFLSRIFGLNSVYNHLQENYQYYDPEFDSTYNQQVLANSQRQDYDLFGNGLDKTNLLDSESDSDLSSSSSASPSVVVKPRFKRTEASDNEDDEVDDLLTSLSKPRSSPPRRKPTFNIPNARDIFSANGNTQATSVLPLYNQKYRKPVERDTGASAGDSRGYANSGIRRTNGTRFVIPPKERALYLWANITNMDEFLTDLYYYYRGKGMLNIVLSSIIDLLILVFILGFTVFLKWGINYRYFFDNYKDSTYITLADLIIPNFLVDEVPLLAKFFLFGFVCYIVLRLIQLYFNYNYKLKEIKNFYKYLINISNDDELMTITWKTIVERLMLLKDYNSLTSTTSHFDGATDHYINDLNSKVRLNAHDIANRIMRKENYMIALINKDVLDLSLSPFQNSSFQLINNKSVLTKTLEWNLKLCINNFAFNNEGQINPSILKDFNRNQLAKELNSRFKMAAIINLILCPFIVIYFVLLYFFRYFNEYKSNPASIMGLRQYTPYAEWKLREFNELPHFFIRRLQLSVGPANTYINMFPRGFLVINLMNLVNFISGAIMAILVIMGLWFEDENHSFWSFELTEGKSTLFYISIFGTLWAITSTSTSTSDTADNLNPNSHSFVYDPEASLRYVSQFTHYLPSSWNRRLHTVEVKNEFCELYSLKIIIILNEIFSLILTPFILWFRASSSSGAIIDFFREYSIHVDGLGYVCYFAMFNFEEKDKNMMFDLNKRKGKSKRSRRSKTSKTSSKKTVNEIELNNIKSKRREKAKISDSEDASSLPNTSDDESGNDLNADTYQDEKMIKSYMYFLESYGAGKADVRAINSNNKLLAKNSVISNIDPSPSLIIQGPSDNHSLLDSAYNINYKFDDAEQEESTRPGKKSGVLGMINQFYKQDLGR.

A compositionally biased stretch (polar residues) spans 1 to 11 (MSRNSPLQSGQ). Disordered stretches follow at residues 1–27 (MSRN…SQNN) and 86–150 (DSES…NARD). Over 1-238 (MSRNSPLQSG…YYYRGKGMLN (238 aa)) the chain is Cytoplasmic. Residues 92–105 (DLSSSSSASPSVVV) are compositionally biased toward low complexity. The segment covering 115–124 (SDNEDDEVDD) has biased composition (acidic residues). A helical transmembrane segment spans residues 239-259 (IVLSSIIDLLILVFILGFTVF). The Lumenal portion of the chain corresponds to 260–293 (LKWGINYRYFFDNYKDSTYITLADLIIPNFLVDE). The helical transmembrane segment at 294–314 (VPLLAKFFLFGFVCYIVLRLI) threads the bilayer. Over 315–481 (QLYFNYNYKL…KELNSRFKMA (167 aa)) the chain is Cytoplasmic. The stretch at 482–502 (AIINLILCPFIVIYFVLLYFF) is an intramembrane region. Residues 503–568 (RYFNEYKSNP…RGFLVINLMN (66 aa)) lie on the Cytoplasmic side of the membrane. Residues 569–589 (LVNFISGAIMAILVIMGLWFE) traverse the membrane as a helical segment. Over 590–605 (DENHSFWSFELTEGKS) the chain is Lumenal. The chain crosses the membrane as a helical span at residues 606–626 (TLFYISIFGTLWAITSTSTST). At 627 to 681 (SDTADNLNPNSHSFVYDPEASLRYVSQFTHYLPSSWNRRLHTVEVKNEFCELYSL) the chain is on the cytoplasmic side. Residues 682 to 702 (KIIIILNEIFSLILTPFILWF) lie within the membrane without spanning it. The Cytoplasmic segment spans residues 703–916 (RASSSSGAII…NQFYKQDLGR (214 aa)). Residues 747–814 (LNKRKGKSKR…ESGNDLNADT (68 aa)) are disordered. The span at 750–762 (RKGKSKRSRRSKT) shows a compositional bias: basic residues.

It belongs to the ATG9 family. Homotrimer; forms a homotrimer with a central pore that forms a path between the two membrane leaflets. Post-translationally, phosphorylated by ATG1. ATG1 phosphorylation is required for preautophagosome elongation.

It is found in the preautophagosomal structure membrane. It localises to the cytoplasmic vesicle membrane. The protein resides in the golgi apparatus membrane. The protein localises to the endoplasmic reticulum membrane. It carries out the reaction a 1,2-diacyl-sn-glycero-3-phosphocholine(in) = a 1,2-diacyl-sn-glycero-3-phosphocholine(out). The enzyme catalyses a 1,2-diacyl-sn-glycero-3-phospho-L-serine(in) = a 1,2-diacyl-sn-glycero-3-phospho-L-serine(out). It catalyses the reaction a 1,2-diacyl-sn-glycero-3-phosphoethanolamine(in) = a 1,2-diacyl-sn-glycero-3-phosphoethanolamine(out). The catalysed reaction is a 1,2-diacyl-sn-glycero-3-phospho-(1D-myo-inositol-3-phosphate)(in) = a 1,2-diacyl-sn-glycero-3-phospho-(1D-myo-inositol-3-phosphate)(out). Its function is as follows. Phospholipid scramblase involved in autophagy and cytoplasm to vacuole transport (Cvt) vesicle formation. Cycles between the preautophagosomal structure/phagophore assembly site (PAS) and the cytoplasmic vesicle pool and supplies membrane for the growing autophagosome. Lipid scramblase activity plays a key role in preautophagosomal structure/phagophore assembly by distributing the phospholipids that arrive through ATG2 from the cytoplasmic to the luminal leaflet of the bilayer, thereby driving autophagosomal membrane expansion. Required for mitophagy. Also involved in endoplasmic reticulum-specific autophagic process and is essential for the survival of cells subjected to severe ER stress. Different machineries are required for anterograde trafficking to the PAS during either the Cvt pathway or bulk autophagy and for retrograde trafficking. This chain is Autophagy-related protein 9 (ATG9), found in Scheffersomyces stipitis (strain ATCC 58785 / CBS 6054 / NBRC 10063 / NRRL Y-11545) (Yeast).